The chain runs to 325 residues: Aerobic respiration control sensor protein ArcB homolog (325 aa).

The Cytoplasmic segment spans residues 1 to 26 (MKNFKYFAQSYVDWVIRLGRLRFSLL). A helical transmembrane segment spans residues 27-47 (GVMILAVLALCTQILFSLFIV). Residues 48 to 57 (HQISWVDIFR) lie on the Periplasmic side of the membrane. A helical membrane pass occupies residues 58-78 (SVTFGLLTAPFVIYFFTLLVE). The Cytoplasmic portion of the chain corresponds to 79–325 (KLEHSRLDLS…AQLMGRGFNS (247 aa)). The region spanning 128-325 (TISHEFRTPL…AQLMGRGFNS (198 aa)) is the Histidine kinase domain. H131 carries the phosphohistidine; by autocatalysis modification.

It localises to the cell inner membrane. It carries out the reaction ATP + protein L-histidine = ADP + protein N-phospho-L-histidine.. Its function is as follows. Member of the two-component regulatory system ArcB/ArcA. Activates ArcA by phosphorylation. The protein is Aerobic respiration control sensor protein ArcB homolog (arcB) of Haemophilus influenzae (strain ATCC 51907 / DSM 11121 / KW20 / Rd).